A 214-amino-acid polypeptide reads, in one-letter code: Large ribosomal subunit protein bL25 (214 aa).

The interval 187–214 (AEVAPSIEETVEPEVIKKGKKAEEEEEK) is disordered. A compositionally biased stretch (basic and acidic residues) spans 200 to 214 (EVIKKGKKAEEEEEK).

It belongs to the bacterial ribosomal protein bL25 family. CTC subfamily. In terms of assembly, part of the 50S ribosomal subunit; part of the 5S rRNA/L5/L18/L25 subcomplex. Contacts the 5S rRNA. Binds to the 5S rRNA independently of L5 and L18.

In terms of biological role, this is one of the proteins that binds to the 5S RNA in the ribosome where it forms part of the central protuberance. This Thermodesulfovibrio yellowstonii (strain ATCC 51303 / DSM 11347 / YP87) protein is Large ribosomal subunit protein bL25.